Reading from the N-terminus, the 1441-residue chain is Lysophospholipase NTE1 (1441 aa).

The Lumenal portion of the chain corresponds to 1 to 22; the sequence is MWLTSYVLPRLKNILLLQFHIT. Residues 23 to 43 traverse the membrane as a helical segment; the sequence is LPLNYLVLLLLSTVIITYLFL. Residues 44-1441 are Cytoplasmic-facing; it reads RTRILSNYSQ…ENMLQRRNSI (1398 aa). Disordered stretches follow at residues 154-173, 210-236, 376-445, and 551-585; these read SNPS…PSND, THLN…TGEI, QDDT…NSSS, and NRTG…HFRN. The span at 376 to 388 shows a compositional bias: polar residues; that stretch reads QDDTGSSASTIQK. Residues 572 to 585 show a composition bias toward basic and acidic residues; the sequence is SRTDRSESFDHFRN. A nucleoside 3',5'-cyclic phosphate contacts are provided by residues 592–718 and 707–836; these read NQFS…LTNS and IYLK…VAKK. The PNPLA domain maps to 1137-1301; that stretch reads LVLGGGGARG…VDNLPVTEMT (165 aa). The GXGXXG motif lies at 1141 to 1146; the sequence is GGGARG. Positions 1168–1172 match the GXSXG motif; that stretch reads GTSIG. The active-site Nucleophile is S1170. The active-site Proton acceptor is the D1288. Positions 1288-1290 match the DGA/G motif; it reads DGG.

The protein belongs to the NTE family.

The protein resides in the endoplasmic reticulum membrane. The enzyme catalyses a 1-acyl-sn-glycero-3-phosphocholine + H2O = sn-glycerol 3-phosphocholine + a fatty acid + H(+). With respect to regulation, inhibited by organophosphorus esters. In terms of biological role, intracellular phospholipase B that catalyzes the double deacylation of phosphatidylcholine (PC) to glycerophosphocholine (GroPCho). Plays an important role in membrane lipid homeostasis. Responsible for the rapid PC turnover in response to inositol, elevated temperatures, or when choline is present in the growth medium. This Kluyveromyces lactis (strain ATCC 8585 / CBS 2359 / DSM 70799 / NBRC 1267 / NRRL Y-1140 / WM37) (Yeast) protein is Lysophospholipase NTE1 (NTE1).